Reading from the N-terminus, the 182-residue chain is Large ribosomal subunit protein uL5 (182 aa).

Belongs to the universal ribosomal protein uL5 family. In terms of assembly, part of the 50S ribosomal subunit; part of the 5S rRNA/L5/L18/L25 subcomplex. Contacts the 5S rRNA and the P site tRNA. Forms a bridge to the 30S subunit in the 70S ribosome.

In terms of biological role, this is one of the proteins that bind and probably mediate the attachment of the 5S RNA into the large ribosomal subunit, where it forms part of the central protuberance. In the 70S ribosome it contacts protein S13 of the 30S subunit (bridge B1b), connecting the 2 subunits; this bridge is implicated in subunit movement. Contacts the P site tRNA; the 5S rRNA and some of its associated proteins might help stabilize positioning of ribosome-bound tRNAs. The chain is Large ribosomal subunit protein uL5 from Leptospira interrogans serogroup Icterohaemorrhagiae serovar copenhageni (strain Fiocruz L1-130).